Here is a 398-residue protein sequence, read N- to C-terminus: Exodeoxyribonuclease 7 large subunit (398 aa).

Belongs to the XseA family. Heterooligomer composed of large and small subunits.

It localises to the cytoplasm. The catalysed reaction is Exonucleolytic cleavage in either 5'- to 3'- or 3'- to 5'-direction to yield nucleoside 5'-phosphates.. Functionally, bidirectionally degrades single-stranded DNA into large acid-insoluble oligonucleotides, which are then degraded further into small acid-soluble oligonucleotides. This is Exodeoxyribonuclease 7 large subunit from Salinibacter ruber (strain DSM 13855 / M31).